Here is a 124-residue protein sequence, read N- to C-terminus: Small ribosomal subunit protein uS13 (124 aa).

Over residues N94–A117 the composition is skewed to basic residues. The disordered stretch occupies residues N94–K124.

The protein belongs to the universal ribosomal protein uS13 family. In terms of assembly, part of the 30S ribosomal subunit. Forms a loose heterodimer with protein S19. Forms two bridges to the 50S subunit in the 70S ribosome.

In terms of biological role, located at the top of the head of the 30S subunit, it contacts several helices of the 16S rRNA. In the 70S ribosome it contacts the 23S rRNA (bridge B1a) and protein L5 of the 50S subunit (bridge B1b), connecting the 2 subunits; these bridges are implicated in subunit movement. Contacts the tRNAs in the A and P-sites. The chain is Small ribosomal subunit protein uS13 from Mycoplasma pneumoniae (strain ATCC 29342 / M129 / Subtype 1) (Mycoplasmoides pneumoniae).